The sequence spans 25 residues: Caerin-1.18 (25 aa).

Leucine amide is present on Leu-25.

In terms of tissue distribution, expressed by the skin dorsal glands.

It is found in the secreted. Functionally, shows significant activity against Gram-positive organisms, but is less effective against Gram-negative organisms. In Ranoidea gracilenta (Dainty green tree frog), this protein is Caerin-1.18.